A 246-amino-acid chain; its full sequence is Small ribosomal subunit protein uS2 (246 aa).

The tract at residues 226–246 (QGEEEAEVAEETAPETETTTA) is disordered. Residues 229 to 239 (EEAEVAEETAP) are compositionally biased toward acidic residues.

The protein belongs to the universal ribosomal protein uS2 family. As to quaternary structure, part of the 30S ribosomal subunit. Interacts with BrxC.

In Bacillus subtilis (strain 168), this protein is Small ribosomal subunit protein uS2 (rpsB).